Consider the following 294-residue polypeptide: tRNA pseudouridine synthase B (294 aa).

Asp39 (nucleophile) is an active-site residue.

The protein belongs to the pseudouridine synthase TruB family. Type 1 subfamily.

It catalyses the reaction uridine(55) in tRNA = pseudouridine(55) in tRNA. In terms of biological role, responsible for synthesis of pseudouridine from uracil-55 in the psi GC loop of transfer RNAs. The protein is tRNA pseudouridine synthase B of Streptococcus pyogenes serotype M5 (strain Manfredo).